The sequence spans 190 residues: Casparian strip membrane protein 1 (190 aa).

The Cytoplasmic portion of the chain corresponds to 1 to 24 (MKAESGSADAKLPLPPPVGRKRRG). Residues 25–45 (LAILDFLLRLLAIGATLSAAI) form a helical membrane-spanning segment. Topologically, residues 46 to 72 (AMGTNNETLKFFTQFFQFNARFYNLSA) are extracellular. N-linked (GlcNAc...) asparagine glycosylation is found at Asn51 and Asn69. A helical transmembrane segment spans residues 73-93 (FIYFVIANATVGLYLLLSLPF). The Cytoplasmic portion of the chain corresponds to 94-107 (SIFDIVRPRAAAFR). A helical membrane pass occupies residues 108–128 (VLLIFFDTVMVAVCTSGAAAA). Residues 129 to 157 (TAIMYVARRGNTKTNWFSICQQFNSFCDQ) are Extracellular-facing. A helical transmembrane segment spans residues 158–178 (ATGALGASFAAVVLLILLVLL). Residues 179-190 (SASTLHRQRADF) are Cytoplasmic-facing.

It belongs to the Casparian strip membrane proteins (CASP) family. Homodimer and heterodimers.

It localises to the cell membrane. Regulates membrane-cell wall junctions and localized cell wall deposition. Required for establishment of the Casparian strip membrane domain (CSD) and the subsequent formation of Casparian strips, a cell wall modification of the root endodermis that determines an apoplastic barrier between the intraorganismal apoplasm and the extraorganismal apoplasm and prevents lateral diffusion. In Pinus taeda (Loblolly pine), this protein is Casparian strip membrane protein 1.